A 393-amino-acid polypeptide reads, in one-letter code: Outer membrane protein assembly factor BamB (393 aa).

Residues 1-19 (MQLRKTLLVGLVSVALLSG) form the signal peptide. C20 is lipidated: N-palmitoyl cysteine. Residue C20 is the site of S-diacylglycerol cysteine attachment.

Belongs to the BamB family. In terms of assembly, part of the Bam complex, which is composed of the outer membrane protein BamA, and four lipoproteins BamB, BamC, BamD and BamE.

It localises to the cell outer membrane. Part of the outer membrane protein assembly complex, which is involved in assembly and insertion of beta-barrel proteins into the outer membrane. The chain is Outer membrane protein assembly factor BamB from Yersinia pestis.